The following is a 285-amino-acid chain: Enterobactin synthase component B (285 aa).

Residues Ala2–Ala213 are isochorismatase. Positions Ala209–Val284 constitute a Carrier domain. Positions 227, 242, and 244 each coordinate Mg(2+). An O-(pantetheine 4'-phosphoryl)serine modification is found at Ser245.

In the N-terminal section; belongs to the isochorismatase family. As to quaternary structure, proteins EntB, EntD, EntE, and EntF form a multienzyme complex called enterobactin synthase. Homodimer. Also forms a specific pairwise interaction with EntC; this interaction likely facilitates substrate channeling to connect the EntB and EntC active sites. Mg(2+) is required as a cofactor. Post-translationally, 4'-phosphopantetheine is transferred from CoA to a specific serine of apo-EntB by EntD. Holo-EntB so formed is then acylated with 2,3-dihydroxybenzoate in a reaction catalyzed by EntE.

The protein resides in the cytoplasm. It carries out the reaction 3 2,3-dihydroxybenzoate + 3 L-serine + 6 ATP = enterobactin + 6 AMP + 6 diphosphate + 4 H(+). It catalyses the reaction isochorismate + H2O = (2S,3S)-2,3-dihydroxy-2,3-dihydrobenzoate + pyruvate. It participates in siderophore biosynthesis; enterobactin biosynthesis. Involved in the biosynthesis of the siderophore enterobactin (enterochelin), which is a macrocyclic trimeric lactone of N-(2,3-dihydroxybenzoyl)-serine. The serine trilactone serves as a scaffolding for the three catechol functionalities that provide hexadentate coordination for the tightly ligated iron(3+) atoms. EntB is a bifunctional protein that serves as an isochorismate lyase and an aryl carrier protein (ArCP). Catalyzes the conversion of isochorismate to 2,3-dihydro-2,3-dihydroxybenzoate (2,3-diDHB), the precursor of 2,3-dihydroxybenzoate (DHB). In the enterobactin assembly, EntB functions as an aryl carrier protein phosphopantetheinylated near the C terminus by EntD to yield holo-EntB, which is then acylated by EntE with 2,3-dihydroxybenzoyl-AMP to form DHB-holo-EntB. Then this product will serve in the formation of the amide bond between 2,3-dihydroxybenzoate (DHB) and L-serine. The sequence is that of Enterobactin synthase component B from Escherichia coli O157:H7.